A 769-amino-acid polypeptide reads, in one-letter code: Probable beta-glucosidase M (769 aa).

Positions 1 to 22 (MHSNLGLAGLAGLLATASVCLS) are cleaved as a signal peptide. N-linked (GlcNAc...) asparagine glycosylation is found at Asn-28, Asn-75, and Asn-262. Asp-290 is a catalytic residue. Residues Asn-318, Asn-325, Asn-437, and Asn-546 are each glycosylated (N-linked (GlcNAc...) asparagine).

This sequence belongs to the glycosyl hydrolase 3 family.

It is found in the secreted. The enzyme catalyses Hydrolysis of terminal, non-reducing beta-D-glucosyl residues with release of beta-D-glucose.. The protein operates within glycan metabolism; cellulose degradation. In terms of biological role, beta-glucosidases are one of a number of cellulolytic enzymes involved in the degradation of cellulosic biomass. Catalyzes the last step releasing glucose from the inhibitory cellobiose. This chain is Probable beta-glucosidase M (bglM), found in Neosartorya fischeri (strain ATCC 1020 / DSM 3700 / CBS 544.65 / FGSC A1164 / JCM 1740 / NRRL 181 / WB 181) (Aspergillus fischerianus).